We begin with the raw amino-acid sequence, 279 residues long: Type III pantothenate kinase (279 aa).

6 to 13 serves as a coordination point for ATP; the sequence is DIGNTLSK. Substrate-binding positions include tyrosine 92 and 99–102; that span reads GVDR. Catalysis depends on aspartate 101, which acts as the Proton acceptor. Aspartate 120 serves as a coordination point for K(+). Position 123 (serine 123) interacts with ATP. Threonine 177 provides a ligand contact to substrate.

This sequence belongs to the type III pantothenate kinase family. As to quaternary structure, homodimer. It depends on NH4(+) as a cofactor. K(+) serves as cofactor.

Its subcellular location is the cytoplasm. It carries out the reaction (R)-pantothenate + ATP = (R)-4'-phosphopantothenate + ADP + H(+). It functions in the pathway cofactor biosynthesis; coenzyme A biosynthesis; CoA from (R)-pantothenate: step 1/5. Functionally, catalyzes the phosphorylation of pantothenate (Pan), the first step in CoA biosynthesis. The protein is Type III pantothenate kinase of Chromohalobacter salexigens (strain ATCC BAA-138 / DSM 3043 / CIP 106854 / NCIMB 13768 / 1H11).